A 720-amino-acid chain; its full sequence is Polyribonucleotide nucleotidyltransferase (720 aa).

Asp484 and Asp490 together coordinate Mg(2+). Positions 551–610 (PRMYKINIDPSKIGSVIGSGGKTIRSIIEQTNTTVDIENDGTVVIGAIDEASAKKAIKII) constitute a KH domain. The S1 motif domain maps to 620–688 (GSIYTGKVTR…NQGRVNLSHR (69 aa)). Residues 697-720 (PISRNRDSQPRRPGPFRPSDRSNS) form a disordered region.

It belongs to the polyribonucleotide nucleotidyltransferase family. The cofactor is Mg(2+).

It localises to the cytoplasm. The catalysed reaction is RNA(n+1) + phosphate = RNA(n) + a ribonucleoside 5'-diphosphate. In terms of biological role, involved in mRNA degradation. Catalyzes the phosphorolysis of single-stranded polyribonucleotides processively in the 3'- to 5'-direction. In Dehalococcoides mccartyi (strain ATCC BAA-2100 / JCM 16839 / KCTC 5957 / BAV1), this protein is Polyribonucleotide nucleotidyltransferase.